Consider the following 234-residue polypeptide: Ribosome maturation protein SDO1 homolog (234 aa).

The protein belongs to the SDO1/SBDS family.

The chain is Ribosome maturation protein SDO1 homolog from Archaeoglobus fulgidus (strain ATCC 49558 / DSM 4304 / JCM 9628 / NBRC 100126 / VC-16).